Reading from the N-terminus, the 360-residue chain is NAD(P)H-quinone oxidoreductase subunit 1, chloroplastic (360 aa).

The next 8 helical transmembrane spans lie at 30-50, 98-118, 127-147, 165-185, 203-223, 248-268, 297-317, and 340-360; these read FLPI…LVWL, FSIG…VIPF, FNIG…GLLM, AAQS…ISLL, FWGW…ISSL, YSGI…LISS, IFGT…FLFI, and FLLP…VFSL.

Belongs to the complex I subunit 1 family. As to quaternary structure, NDH is composed of at least 16 different subunits, 5 of which are encoded in the nucleus.

It is found in the plastid. It localises to the chloroplast thylakoid membrane. The catalysed reaction is a plastoquinone + NADH + (n+1) H(+)(in) = a plastoquinol + NAD(+) + n H(+)(out). It catalyses the reaction a plastoquinone + NADPH + (n+1) H(+)(in) = a plastoquinol + NADP(+) + n H(+)(out). Its function is as follows. NDH shuttles electrons from NAD(P)H:plastoquinone, via FMN and iron-sulfur (Fe-S) centers, to quinones in the photosynthetic chain and possibly in a chloroplast respiratory chain. The immediate electron acceptor for the enzyme in this species is believed to be plastoquinone. Couples the redox reaction to proton translocation, and thus conserves the redox energy in a proton gradient. The sequence is that of NAD(P)H-quinone oxidoreductase subunit 1, chloroplastic from Aethionema grandiflorum (Persian stone-cress).